The sequence spans 360 residues: Peptide chain release factor 1 (360 aa).

Q233 carries the N5-methylglutamine modification. The segment at 286-305 is disordered; sequence NEIAQERKSQVGTGDRSERI.

It belongs to the prokaryotic/mitochondrial release factor family. Methylated by PrmC. Methylation increases the termination efficiency of RF1.

The protein resides in the cytoplasm. In terms of biological role, peptide chain release factor 1 directs the termination of translation in response to the peptide chain termination codons UAG and UAA. The sequence is that of Peptide chain release factor 1 from Acetivibrio thermocellus (strain ATCC 27405 / DSM 1237 / JCM 9322 / NBRC 103400 / NCIMB 10682 / NRRL B-4536 / VPI 7372) (Clostridium thermocellum).